We begin with the raw amino-acid sequence, 350 residues long: UBX domain-containing protein 2B (350 aa).

Residues 1–29 (MEERENSEEGDDGAGEEEEEDQGSGEDGG) show a composition bias toward acidic residues. Residues 1–46 (MEERENSEEGDDGAGEEEEEDQGSGEDGGEVGAEREQEAELKDSLR) are disordered. The segment covering 32-45 (GAEREQEAELKDSL) has biased composition (basic and acidic residues). One can recognise an SEP domain in the interval 160–225 (EIQILLKLWS…MEDHQDQEYI (66 aa)). The region spanning 271-348 (EHVPTTKIQI…DILNTVILQR (78 aa)) is the UBX domain.

It belongs to the NSFL1C family.

It is found in the nucleus. Its subcellular location is the cytoplasm. The protein resides in the cytosol. The protein localises to the endoplasmic reticulum. It localises to the golgi apparatus. It is found in the cytoskeleton. Its subcellular location is the microtubule organizing center. The protein resides in the centrosome. Adapter protein required for Golgi and endoplasmic reticulum biogenesis. Involved in Golgi and endoplasmic reticulum maintenance during interphase and in their reassembly at the end of mitosis. Regulates the centrosomal levels of kinase aurka-a/Aurora A during mitotic progression by promoting aurka-a removal from centrosomes in prophase. Also, regulates spindle orientation during mitosis. The protein is UBX domain-containing protein 2B (ubxn2b) of Xenopus laevis (African clawed frog).